A 114-amino-acid polypeptide reads, in one-letter code: Small nuclear ribonucleoprotein SmD1a (114 aa).

In terms of domain architecture, Sm spans 2 to 74; sequence KLVRFLMKLN…IRYYILPDSL (73 aa). The disordered stretch occupies residues 87–114; sequence VKPKKPVAGKAVGRGRGRGRGRGRGRGR. Tandem repeats lie at residues 99–100, 101–102, 103–104, 105–106, 107–108, 109–110, 111–112, and 113–114. Residues 99 to 114 are 8 X 2 AA tandem repeats of G-R; that stretch reads GRGRGRGRGRGRGRGR.

It belongs to the snRNP core protein family.

The protein resides in the nucleus. It localises to the nucleus speckle. The protein localises to the nucleolus. Functionally, involved in splicing regulation. Facilitates post-transcriptional gene silencing (PTGS) by limiting the degradation of transgene aberrant RNAs by the RNA quality control (RQC) machinery, thus favoring their entry into cytoplasmic siRNA bodies where they can trigger PTGS. Does not participate in the production of small RNAs. The sequence is that of Small nuclear ribonucleoprotein SmD1a from Arabidopsis thaliana (Mouse-ear cress).